Reading from the N-terminus, the 325-residue chain is Putative aryl-alcohol dehydrogenase C750.01 (325 aa).

The protein belongs to the aldo/keto reductase family. Aldo/keto reductase 2 subfamily.

This is Putative aryl-alcohol dehydrogenase C750.01 from Schizosaccharomyces pombe (strain 972 / ATCC 24843) (Fission yeast).